The following is a 222-amino-acid chain: Chorionic somatomammotropin hormone-like 1 (222 aa).

The N-terminal stretch at 1-26 (MAAGSRTSLLLAFALLCLPWLQEAGA) is a signal peptide. Zn(2+) is bound by residues His44 and Glu205. A disulfide bond links Cys213 and Cys220.

It belongs to the somatotropin/prolactin family.

It is found in the secreted. May be a novel gestational hormone required to compensate for absence of other members of the GH/CS cluster during gestation. This Homo sapiens (Human) protein is Chorionic somatomammotropin hormone-like 1 (CSHL1).